The following is a 456-amino-acid chain: tRNA modification GTPase MnmE (456 aa).

(6S)-5-formyl-5,6,7,8-tetrahydrofolate contacts are provided by Arg23, Glu85, and Arg124. Residues 220 to 375 (GLRVLIFGKP…LVSAIQERFV (156 aa)) enclose the TrmE-type G domain. Residue Asn230 coordinates K(+). GTP contacts are provided by residues 230-235 (NVGKSS), 249-255 (TDIPGTT), and 274-277 (DTAG). Ser234 is a Mg(2+) binding site. K(+)-binding residues include Thr249, Ile251, and Thr254. Thr255 is a binding site for Mg(2+). (6S)-5-formyl-5,6,7,8-tetrahydrofolate is bound at residue Lys456.

Belongs to the TRAFAC class TrmE-Era-EngA-EngB-Septin-like GTPase superfamily. TrmE GTPase family. In terms of assembly, homodimer. Heterotetramer of two MnmE and two MnmG subunits. K(+) is required as a cofactor.

The protein localises to the cytoplasm. Exhibits a very high intrinsic GTPase hydrolysis rate. Involved in the addition of a carboxymethylaminomethyl (cmnm) group at the wobble position (U34) of certain tRNAs, forming tRNA-cmnm(5)s(2)U34. This is tRNA modification GTPase MnmE from Syntrophotalea carbinolica (strain DSM 2380 / NBRC 103641 / GraBd1) (Pelobacter carbinolicus).